The following is a 503-amino-acid chain: MEVAAGAPRSRLLLFVLAATATLAPEATAFQCFCHLCTKDNFTCVTDGLCFVSVTETTDKVIHNSMCIAEIDLIPRDRPFVCAPSSKTGSVTTTYCCNQDHCNKIELPTVGPFPGKPPSGLGPVELAAVIAGPVCFVCISLMLMVYICHNRTVIHHRVPNEEDPSLDRPFISEGTTLKDLIYDMTTSGSGSGLPLLVQRTIARTIVLQESIGKGRFGEVWRGKWRGEEVAVKIFSSREERSWFREAEIYQTVMLRHENILGFIAADNKDNGTWTQLWLVSDYHEHGSLFDYLNRYTVTVEGMIKLALSTASGLAHLHMEIVGTQGKPAIAHRDLKSKNILVKKNGTCCIADLGLAVRHDSATDTIDIAPNHRVGTKRYMAPEVLDDSINMKHFESFKRADIYAMGLVFWEIARRCSIGGIHEDYQLPYYDLVPSDPSVEEMRKVVCEQKLRPNIPNRWQSCEALRVMAKIMRECWYANGAARLTALRIKKTLSQLSQQEGIKM.

An N-terminal signal peptide occupies residues 1–29; sequence MEVAAGAPRSRLLLFVLAATATLAPEATA. The Extracellular segment spans residues 30–126; it reads FQCFCHLCTK…PPSGLGPVEL (97 aa). 5 disulfides stabilise this stretch: Cys-32–Cys-50, Cys-34–Cys-37, Cys-44–Cys-67, Cys-82–Cys-96, and Cys-97–Cys-102. N-linked (GlcNAc...) asparagine glycosylation is present at Asn-41. The helical transmembrane segment at 127-147 threads the bilayer; the sequence is AAVIAGPVCFVCISLMLMVYI. Residues 148–503 lie on the Cytoplasmic side of the membrane; that stretch reads CHNRTVIHHR…QLSQQEGIKM (356 aa). The residue at position 165 (Ser-165) is a Phosphoserine. In terms of domain architecture, GS spans 175–204; that stretch reads TTLKDLIYDMTTSGSGSGLPLLVQRTIART. Residues Thr-185 and Thr-186 each carry the phosphothreonine; by TGFBR2 modification. A phosphoserine; by TGFBR2 mark is found at Ser-187, Ser-189, and Ser-191. The short motif at 193 to 194 is the FKBP1A-binding element; that stretch reads LP. One can recognise a Protein kinase domain in the interval 205–495; that stretch reads IVLQESIGKG…LRIKKTLSQL (291 aa). ATP-binding positions include 211–219 and Lys-232; that span reads IGKGRFGEV. The active-site Proton acceptor is the Asp-333. Residue Lys-391 forms a Glycyl lysine isopeptide (Lys-Gly) (interchain with G-Cter in SUMO) linkage.

It belongs to the protein kinase superfamily. TKL Ser/Thr protein kinase family. TGFB receptor subfamily. Homodimer; in the endoplasmic reticulum but also at the cell membrane. Heterohexamer; TGFB1, TGFB2 and TGFB3 homodimeric ligands assemble a functional receptor composed of two TGFBR1 and TGFBR2 heterodimers to form a ligand-receptor heterohexamer. The respective affinity of TGBRB1 and TGFBR2 for the ligands may modulate the kinetics of assembly of the receptor and may explain the different biological activities of TGFB1, TGFB2 and TGFB3. Component of a complex composed of TSC22D1 (via N-terminus), TGFBR1 and TGFBR2; the interaction between TSC22D1 and TGFBR1 is inhibited by SMAD7 and promoted by TGFB1. Interacts with CD109; inhibits TGF-beta receptor activation in keratinocytes. Interacts with RBPMS. Interacts (unphosphorylated) with FKBP1A; prevents TGFBR1 phosphorylation by TGFBR2 and stabilizes it in the inactive conformation. Interacts with SMAD2, SMAD3 and ZFYVE9; ZFYVE9 recruits SMAD2 and SMAD3 to the TGF-beta receptor. Interacts with TRAF6 and MAP3K7; induces MAP3K7 activation by TRAF6. Interacts with PARD6A; involved in TGF-beta induced epithelial to mesenchymal transition. Interacts with NEDD4L. Interacts with SMAD7, SMURF1 and SMURF2; SMAD7 recruits NEDD4L, SMURF1 and SMURF2 to the TGF-beta receptor. Interacts with USP15 and VPS39. Interacts with SDCBP (via C-terminus). Interacts with CAV1 and this interaction is impaired in the presence of SDCBP. Interacts with APPL1; interaction is TGF beta dependent; mediates trafficking of the TGFBR1 from the endosomes to the nucleus via microtubules in a TRAF6-dependent manner. Interacts with GPR50; this interaction promotes the constitutive activation of SMAD signaling pathway. Requires Mg(2+) as cofactor. The cofactor is Mn(2+). Phosphorylated at basal levels in the absence of ligand. Activated upon phosphorylation by TGFBR2, mainly in the GS domain. Phosphorylation in the GS domain abrogates FKBP1A-binding. Post-translationally, N-Glycosylated. In terms of processing, ubiquitinated; undergoes ubiquitination catalyzed by several E3 ubiquitin ligases including SMURF1, SMURF2 and NEDD4L2. Results in the proteasomal and/or lysosomal degradation of the receptor thereby negatively regulating its activity. Deubiquitinated by USP15, leading to stabilization of the protein and enhanced TGF-beta signal. Its ubiquitination and proteasome-mediated degradation is negatively regulated by SDCBP.

It is found in the cell membrane. The protein resides in the cell junction. It localises to the tight junction. The protein localises to the membrane raft. Its subcellular location is the cell surface. The enzyme catalyses L-threonyl-[receptor-protein] + ATP = O-phospho-L-threonyl-[receptor-protein] + ADP + H(+). It catalyses the reaction L-seryl-[receptor-protein] + ATP = O-phospho-L-seryl-[receptor-protein] + ADP + H(+). With respect to regulation, kept in an inactive conformation by FKBP1A preventing receptor activation in absence of ligand. CD109 is another inhibitor of the receptor. Its function is as follows. Transmembrane serine/threonine kinase forming with the TGF-beta type II serine/threonine kinase receptor, TGFBR2, the non-promiscuous receptor for the TGF-beta cytokines TGFB1, TGFB2 and TGFB3. Transduces the TGFB1, TGFB2 and TGFB3 signal from the cell surface to the cytoplasm and is thus regulating a plethora of physiological and pathological processes including cell cycle arrest in epithelial and hematopoietic cells, control of mesenchymal cell proliferation and differentiation, wound healing, extracellular matrix production, immunosuppression and carcinogenesis. The formation of the receptor complex composed of 2 TGFBR1 and 2 TGFBR2 molecules symmetrically bound to the cytokine dimer results in the phosphorylation and the activation of TGFBR1 by the constitutively active TGFBR2. Activated TGFBR1 phosphorylates SMAD2 which dissociates from the receptor and interacts with SMAD4. The SMAD2-SMAD4 complex is subsequently translocated to the nucleus where it modulates the transcription of the TGF-beta-regulated genes. This constitutes the canonical SMAD-dependent TGF-beta signaling cascade. Also involved in non-canonical, SMAD-independent TGF-beta signaling pathways. For instance, TGFBR1 induces TRAF6 autoubiquitination which in turn results in MAP3K7 ubiquitination and activation to trigger apoptosis. Also regulates epithelial to mesenchymal transition through a SMAD-independent signaling pathway through PARD6A phosphorylation and activation. The chain is TGF-beta receptor type-1 (TGFBR1) from Sus scrofa (Pig).